A 211-amino-acid chain; its full sequence is MSVPQIQVEEVAGGEEGPAGTTPPPDDHLRSLKALTEKLRLETRRPSYLEWQARLEEQTWPFPRPAAEPRGSGEEEPSLLRTRALRPHPPPNGRANQDDGHPPTGKLEGFESIDEAIAWLRKELMEMRLQDQQLARQLMRLRSDIHKLKIEQTCDLHRRMLNDATYELEERDELSDLFCDAPLASSFSLSAPLKLIGVTKMNINSRRFSLC.

Disordered regions lie at residues 1–30 and 56–108; these read MSVP…DHLR and EEQT…GKLE. The stretch at 120-153 forms a coiled coil; sequence LRKELMEMRLQDQQLARQLMRLRSDIHKLKIEQT.

Belongs to the FAM167 (SEC) family.

The polypeptide is Protein FAM167A (FAM167A) (Bos taurus (Bovine)).